Reading from the N-terminus, the 318-residue chain is Olfactory receptor-like protein COR3 (318 aa).

Residues 1–26 (MASGNCTTPTTFILSGLTDNPGLQMP) lie on the Extracellular side of the membrane. Residue N5 is glycosylated (N-linked (GlcNAc...) asparagine). Residues 27 to 49 (LFMVFLAIYTITLLTNLGLIRLI) form a helical membrane-spanning segment. Over 50–57 (SVDLHLQT) the chain is Cytoplasmic. The chain crosses the membrane as a helical span at residues 58 to 79 (PMYIFLQNLSFTDAAYSTVITP). Residues 80–100 (KMLATFLEERKTISYVGCILQ) lie on the Extracellular side of the membrane. C97 and C179 are disulfide-bonded. Residues 101–120 (YFSFVLLTTSECLLLAVMAY) traverse the membrane as a helical segment. Topologically, residues 121 to 139 (DRYVAICKPLLYPAIMTKA) are cytoplasmic. The chain crosses the membrane as a helical span at residues 140-164 (VCWRLVESLYFLAFLNSLVHTCGLL). Residues 165 to 205 (KLSFCYSNVVNHFFCDISPLFQISSSSIAISELLVIISGSL) are Extracellular-facing. The helical transmembrane segment at 206–226 (FVMSSIIIILISYVFIILTVV) threads the bilayer. At 227–239 (MIRSKDGKYKAFS) the chain is on the cytoplasmic side. The helical transmembrane segment at 240-260 (TCTSHLMAVSLFHGTVIFMYL) threads the bilayer. The Extracellular portion of the chain corresponds to 261–271 (RPVKLFSLDTD). The chain crosses the membrane as a helical span at residues 272–292 (KIASLFYTVVIPMLNPLIYSW). The Cytoplasmic portion of the chain corresponds to 293–318 (RNKEVKDALRRLTATTFGFIDSKAVQ).

It belongs to the G-protein coupled receptor 1 family.

It localises to the cell membrane. Odorant receptor. This is Olfactory receptor-like protein COR3 (COR3) from Gallus gallus (Chicken).